Here is a 206-residue protein sequence, read N- to C-terminus: Small ribosomal subunit protein uS4 (206 aa).

Residues 98–164 form the S4 RNA-binding domain; it reads MRLDNVVYRL…EKFKTFIENP (67 aa).

The protein belongs to the universal ribosomal protein uS4 family. Part of the 30S ribosomal subunit. Contacts protein S5. The interaction surface between S4 and S5 is involved in control of translational fidelity.

In terms of biological role, one of the primary rRNA binding proteins, it binds directly to 16S rRNA where it nucleates assembly of the body of the 30S subunit. Its function is as follows. With S5 and S12 plays an important role in translational accuracy. This chain is Small ribosomal subunit protein uS4, found in Clostridium tetani (strain Massachusetts / E88).